The following is a 313-amino-acid chain: Ribosomal RNA small subunit methyltransferase H (313 aa).

S-adenosyl-L-methionine is bound by residues 35–37 (GGH), aspartate 55, phenylalanine 79, aspartate 101, and glutamine 108.

This sequence belongs to the methyltransferase superfamily. RsmH family.

Its subcellular location is the cytoplasm. It catalyses the reaction cytidine(1402) in 16S rRNA + S-adenosyl-L-methionine = N(4)-methylcytidine(1402) in 16S rRNA + S-adenosyl-L-homocysteine + H(+). Its function is as follows. Specifically methylates the N4 position of cytidine in position 1402 (C1402) of 16S rRNA. This chain is Ribosomal RNA small subunit methyltransferase H, found in Salmonella newport (strain SL254).